Consider the following 172-residue polypeptide: Large ribosomal subunit protein uL10 (172 aa).

This sequence belongs to the universal ribosomal protein uL10 family. In terms of assembly, part of the ribosomal stalk of the 50S ribosomal subunit. The N-terminus interacts with L11 and the large rRNA to form the base of the stalk. The C-terminus forms an elongated spine to which L12 dimers bind in a sequential fashion forming a multimeric L10(L12)X complex.

Functionally, forms part of the ribosomal stalk, playing a central role in the interaction of the ribosome with GTP-bound translation factors. This Chlamydia trachomatis serovar A (strain ATCC VR-571B / DSM 19440 / HAR-13) protein is Large ribosomal subunit protein uL10.